The primary structure comprises 257 residues: Outer membrane protein Omp26La (257 aa).

Residues 1-19 (MKKIALFITASLIAGNTLA) form the signal peptide.

The protein belongs to the MipA/OmpV family.

Its subcellular location is the cell outer membrane. This is Outer membrane protein Omp26La from Vibrio anguillarum (Listonella anguillarum).